An 87-amino-acid chain; its full sequence is U3-theraphotoxin-Cg1b (87 aa).

Residues 1–23 form the signal peptide; that stretch reads MRTFTLIAILTCAVLVIFHVSAA. Positions 24-48 are excised as a propeptide; sequence EELEAQDVIQPEDIFTGVATLEEDR. 3 disulfides stabilise this stretch: cysteine 52/cysteine 65, cysteine 56/cysteine 79, and cysteine 73/cysteine 84.

The protein belongs to the neurotoxin 12 (Hwtx-2) family. 03 (juruin) subfamily. In terms of tissue distribution, expressed by the venom gland.

The protein resides in the secreted. In terms of biological role, probable ion channel inhibitor. In Chilobrachys guangxiensis (Chinese earth tiger tarantula), this protein is U3-theraphotoxin-Cg1b.